We begin with the raw amino-acid sequence, 469 residues long: Glutamate--tRNA ligase (469 aa).

The 'HIGH' region motif lies at 9–19 (PSPTGYLHVGG). Zn(2+)-binding residues include cysteine 98, cysteine 100, cysteine 125, and aspartate 127. The short motif at 237-241 (KLSKR) is the 'KMSKS' region element. Lysine 240 contacts ATP.

It belongs to the class-I aminoacyl-tRNA synthetase family. Glutamate--tRNA ligase type 1 subfamily. In terms of assembly, monomer. The cofactor is Zn(2+).

The protein resides in the cytoplasm. It catalyses the reaction tRNA(Glu) + L-glutamate + ATP = L-glutamyl-tRNA(Glu) + AMP + diphosphate. In terms of biological role, catalyzes the attachment of glutamate to tRNA(Glu) in a two-step reaction: glutamate is first activated by ATP to form Glu-AMP and then transferred to the acceptor end of tRNA(Glu). This is Glutamate--tRNA ligase from Serratia proteamaculans (strain 568).